Consider the following 296-residue polypeptide: Phosphoribosylaminoimidazole-succinocarboxamide synthase (296 aa).

The protein belongs to the SAICAR synthetase family.

It catalyses the reaction 5-amino-1-(5-phospho-D-ribosyl)imidazole-4-carboxylate + L-aspartate + ATP = (2S)-2-[5-amino-1-(5-phospho-beta-D-ribosyl)imidazole-4-carboxamido]succinate + ADP + phosphate + 2 H(+). It participates in purine metabolism; IMP biosynthesis via de novo pathway; 5-amino-1-(5-phospho-D-ribosyl)imidazole-4-carboxamide from 5-amino-1-(5-phospho-D-ribosyl)imidazole-4-carboxylate: step 1/2. The polypeptide is Phosphoribosylaminoimidazole-succinocarboxamide synthase (Geotalea uraniireducens (strain Rf4) (Geobacter uraniireducens)).